Reading from the N-terminus, the 289-residue chain is Release factor glutamine methyltransferase (289 aa).

S-adenosyl-L-methionine-binding positions include 122–126, Asp145, Trp174, and Asn189; that span reads GVGSG. 189–192 lines the substrate pocket; that stretch reads NPPY.

This sequence belongs to the protein N5-glutamine methyltransferase family. PrmC subfamily.

It catalyses the reaction L-glutaminyl-[peptide chain release factor] + S-adenosyl-L-methionine = N(5)-methyl-L-glutaminyl-[peptide chain release factor] + S-adenosyl-L-homocysteine + H(+). Functionally, methylates the class 1 translation termination release factors RF1/PrfA and RF2/PrfB on the glutamine residue of the universally conserved GGQ motif. The chain is Release factor glutamine methyltransferase from Caulobacter vibrioides (strain ATCC 19089 / CIP 103742 / CB 15) (Caulobacter crescentus).